The following is a 196-amino-acid chain: DnaA initiator-associating protein DiaA (196 aa).

The region spanning 34–196 (LVHSLLNGNK…DNTLFPHQDD (163 aa)) is the SIS domain.

Belongs to the SIS family. DiaA subfamily. Homotetramer; dimer of dimers.

Its function is as follows. Required for the timely initiation of chromosomal replication via direct interactions with the DnaA initiator protein. The sequence is that of DnaA initiator-associating protein DiaA from Salmonella enteritidis PT4 (strain P125109).